A 674-amino-acid polypeptide reads, in one-letter code: MDPAAPAARMTSSFTINISTPSFYNPPKKFAPVVPPKPKVNPFRAAEEPVPQENSAGPGLRRAFVGKVGQIPSMAPPGGDPEDFVLPPPPPNEEPMSPPGSSFPPPPPSFGDDGPGSPLGLFPPPPPPEFSEPFPPPIEESFPSPPPLEEAAGLSDTQDPPASVPPPPPPLPSPPEPAPPVLCEAPKPAPVLPKPPPPSAFPKPEPPQSVAPKAQSSIFIPKPSPPSAVAPKPVAPPPVAAKPSGPGPFVGPSAAPPTHTPAPPAPAHTFSPKPVAGPTFAPKSASHTFMAKPSAPVFSPKAATEPPTEAPQERFPASQSSPKLTPAAKHEAPPPAAKHEAPPPASATRAPGFSFAQQRDKPRVLEKPRANVRDLVPEPPVETRGERTLGPQAEGGRSFGAQPIGGKDTKPLPEGLRNQTPDGTHRVGGQPGTHRPTPHQDQTSGSQGLNMKEVEELEMLTQQLMQEMDKPTPAAEAHTMELCGFCGRGLSRTETVVRAGEHLYHVTCFTCSKCEQQLQGQQYYESAGKPLCEECYQDTLECCAVCEKKITERLLRAIGQAYHPSCFTCAVCKCSLQGEPFIVDDNKLPHCVSDYHRRYAPRCTVCGDPIAPEPGRDETVRVVALEKNFHMMCYKCEDCGCPLSIEADDGGCFPLDGHVLCKKCHTVRARAALG.

The segment at 35–447 (PPKPKVNPFR…PHQDQTSGSQ (413 aa)) is disordered. The segment covering 86–109 (LPPPPPNEEPMSPPGSSFPPPPPS) has biased composition (pro residues). Residues 110–120 (FGDDGPGSPLG) are compositionally biased toward low complexity. Pro residues-rich tracts occupy residues 121 to 148 (LFPP…PPPL), 162 to 180 (ASVP…PAPP), 187 to 209 (KPAP…PPQS), 222 to 240 (KPSP…PPVA), and 254 to 266 (AAPP…PPAP). 2 stretches are compositionally biased toward basic and acidic residues: residues 328–341 (AKHE…KHEA) and 358–387 (QRDK…RGER). 3 consecutive LIM zinc-binding domains span residues 481–542 (ELCG…TLEC), 543–600 (CAVC…RRYA), and 601–671 (PRCT…RARA).

The protein belongs to the zyxin/ajuba family. Interacts (via LIM2 domain) with hesx1/anf1.

The protein localises to the cytoplasm. Its subcellular location is the cytoskeleton. It is found in the cell junction. The protein resides in the focal adhesion. Adhesion plaque protein. May be a component of a signal transduction pathway that mediates adhesion-stimulated changes in gene expression. Suppresses the transcription-repressing activity of hesx1/anf1. The polypeptide is Zyxin (Xenopus tropicalis (Western clawed frog)).